Reading from the N-terminus, the 341-residue chain is MVREEVPVSTRTLQWKCVESRADSKRLYYGRFVLSPLMKGQADTIGIAMRRALLGELEGTCITRAKSDKVPHEYSTVVGIEESVHEILMNLKKMVFRSDLYGTLDASICVRGPRHVTAQDIISPPSVEIVDTTQHIAVLTEPVDLCIELKIERGRGYCTRTQNNYQDGSYPIDAVSMPVRNANHSIHSYGNGNEKQEILFLEIWTNGSLTPKEALYEASRNLIDLFIPFLHAEEQDINRNMEDNLKRASVPFFAFDDGLDNIKREIILKRIFIDQLELPPRTYNCLKRSNIHTLLDLLSKSQEDLMRIEHFRVEDVKQIFDILQKGFTIDLLKNSNQFESR.

The interval Met-1–Glu-233 is alpha N-terminal domain (alpha-NTD). Positions Ile-266–Arg-341 are alpha C-terminal domain (alpha-CTD).

It belongs to the RNA polymerase alpha chain family. In terms of assembly, in plastids the minimal PEP RNA polymerase catalytic core is composed of four subunits: alpha, beta, beta', and beta''. When a (nuclear-encoded) sigma factor is associated with the core the holoenzyme is formed, which can initiate transcription.

It localises to the plastid. Its subcellular location is the chloroplast. The enzyme catalyses RNA(n) + a ribonucleoside 5'-triphosphate = RNA(n+1) + diphosphate. In terms of biological role, DNA-dependent RNA polymerase catalyzes the transcription of DNA into RNA using the four ribonucleoside triphosphates as substrates. The polypeptide is DNA-directed RNA polymerase subunit alpha (Nymphaea alba (White water-lily)).